The sequence spans 79 residues: MENIEQRVKKIVAEQLGVNESEIKNESSFVDDLGADSLDTVELVMALEEEFECEIPDEEAEKITTVQQAIDYVNAHLKK.

Residues 2–77 (ENIEQRVKKI…QAIDYVNAHL (76 aa)) enclose the Carrier domain. S37 bears the O-(pantetheine 4'-phosphoryl)serine mark.

This sequence belongs to the acyl carrier protein (ACP) family. 4'-phosphopantetheine is transferred from CoA to a specific serine of apo-ACP by AcpS. This modification is essential for activity because fatty acids are bound in thioester linkage to the sulfhydryl of the prosthetic group.

Its subcellular location is the cytoplasm. The protein operates within lipid metabolism; fatty acid biosynthesis. Functionally, carrier of the growing fatty acid chain in fatty acid biosynthesis. The sequence is that of Acyl carrier protein from Azoarcus sp. (strain BH72).